Here is a 339-residue protein sequence, read N- to C-terminus: D-erythrose-4-phosphate dehydrogenase (339 aa).

11-12 contributes to the NAD(+) binding site; it reads RI. Residues 153-155, Arg199, 212-213, and Arg235 each bind substrate; these read SCT and TK. Cys154 functions as the Nucleophile in the catalytic mechanism. Asn317 is an NAD(+) binding site.

It belongs to the glyceraldehyde-3-phosphate dehydrogenase family. Epd subfamily. As to quaternary structure, homotetramer.

It localises to the cytoplasm. The catalysed reaction is D-erythrose 4-phosphate + NAD(+) + H2O = 4-phospho-D-erythronate + NADH + 2 H(+). It functions in the pathway cofactor biosynthesis; pyridoxine 5'-phosphate biosynthesis; pyridoxine 5'-phosphate from D-erythrose 4-phosphate: step 1/5. Catalyzes the NAD-dependent conversion of D-erythrose 4-phosphate to 4-phosphoerythronate. This is D-erythrose-4-phosphate dehydrogenase from Shewanella frigidimarina (strain NCIMB 400).